The primary structure comprises 337 residues: Protein-methionine-sulfoxide reductase catalytic subunit MsrP (337 aa).

A signal peptide (tat-type signal) is located at residues M1–A48. Residues N94, Y97–E98, C152, T187, N237, R242, and S253–K255 contribute to the Mo-molybdopterin site.

This sequence belongs to the MsrP family. In terms of assembly, heterodimer of a catalytic subunit (MsrP) and a heme-binding subunit (MsrQ). Requires Mo-molybdopterin as cofactor. Predicted to be exported by the Tat system. The position of the signal peptide cleavage has not been experimentally proven.

The protein localises to the periplasm. The enzyme catalyses L-methionyl-[protein] + a quinone + H2O = L-methionyl-(S)-S-oxide-[protein] + a quinol. The catalysed reaction is L-methionyl-[protein] + a quinone + H2O = L-methionyl-(R)-S-oxide-[protein] + a quinol. In terms of biological role, part of the MsrPQ system that repairs oxidized periplasmic proteins containing methionine sulfoxide residues (Met-O), using respiratory chain electrons. Thus protects these proteins from oxidative-stress damage caused by reactive species of oxygen and chlorine generated by the host defense mechanisms. MsrPQ is essential for the maintenance of envelope integrity under bleach stress, rescuing a wide series of structurally unrelated periplasmic proteins from methionine oxidation. The catalytic subunit MsrP is non-stereospecific, being able to reduce both (R-) and (S-) diastereoisomers of methionine sulfoxide. This Pseudomonas aeruginosa (strain ATCC 15692 / DSM 22644 / CIP 104116 / JCM 14847 / LMG 12228 / 1C / PRS 101 / PAO1) protein is Protein-methionine-sulfoxide reductase catalytic subunit MsrP.